A 412-amino-acid chain; its full sequence is Multifunctional CCA protein (412 aa).

ATP is bound by residues Gly8 and Arg11. The CTP site is built by Gly8 and Arg11. Residues Asp21 and Asp23 each contribute to the Mg(2+) site. ATP-binding residues include Arg91, Arg137, and Arg140. CTP contacts are provided by Arg91, Arg137, and Arg140. One can recognise an HD domain in the interval 228–329; it reads TGIHTLMTLS…VKLFDSIDAW (102 aa).

The protein belongs to the tRNA nucleotidyltransferase/poly(A) polymerase family. Bacterial CCA-adding enzyme type 1 subfamily. In terms of assembly, monomer. Can also form homodimers and oligomers. Mg(2+) serves as cofactor. It depends on Ni(2+) as a cofactor.

The catalysed reaction is a tRNA precursor + 2 CTP + ATP = a tRNA with a 3' CCA end + 3 diphosphate. The enzyme catalyses a tRNA with a 3' CCA end + 2 CTP + ATP = a tRNA with a 3' CCACCA end + 3 diphosphate. Its function is as follows. Catalyzes the addition and repair of the essential 3'-terminal CCA sequence in tRNAs without using a nucleic acid template. Adds these three nucleotides in the order of C, C, and A to the tRNA nucleotide-73, using CTP and ATP as substrates and producing inorganic pyrophosphate. tRNA 3'-terminal CCA addition is required both for tRNA processing and repair. Also involved in tRNA surveillance by mediating tandem CCA addition to generate a CCACCA at the 3' terminus of unstable tRNAs. While stable tRNAs receive only 3'-terminal CCA, unstable tRNAs are marked with CCACCA and rapidly degraded. The chain is Multifunctional CCA protein from Shigella flexneri.